Here is a 1464-residue protein sequence, read N- to C-terminus: Collagen alpha-1(III) chain (1464 aa).

Positions 1–23 (MMSFVQSGTWFLLTLLHPTLILA) are cleaved as a signal peptide. Positions 24–154 (QQSNVDELGC…CPTGGQNYSP (131 aa)) are cleaved as a propeptide — N-terminal propeptide. The VWFC domain maps to 31–90 (LGCSHLGQSYESRDVWKPEPCQICVCDSGSVLCDDIICDEEPLDCPNPEIPFGECCAICP). Residues 97–1195 (PVLPDGHGPQ…PGPPGAPGPC (1099 aa)) form a disordered region. Positions 100–109 (PDGHGPQGPK) are enriched in low complexity. Residues 147–156 (TGGQNYSPQF) are compositionally biased toward polar residues. The interval 155–169 (QFDSYDVKSGVGGMG) is nonhelical region (N-terminal). Residues 164-173 (GVGGMGGYPG) show a composition bias toward gly residues. Residues 170 to 1195 (GYPGPAGPPG…PGPPGAPGPC (1026 aa)) form a triple-helical region region. Positions 174-184 (PAGPPGPPGPP) are enriched in pro residues. The segment covering 186 to 198 (SSGHPGSPGSPGY) has biased composition (low complexity). The segment covering 228–240 (KDGESGRPGRPGE) has biased composition (basic and acidic residues). A 5-hydroxylysine; alternate modification is found at Lys-262. Residue Lys-262 is glycosylated (O-linked (Gal...) hydroxylysine; alternate). The span at 265 to 276 (RGFDGRNGEKGE) shows a compositional bias: basic and acidic residues. At Lys-283 the chain carries 5-hydroxylysine. 2 stretches are compositionally biased toward low complexity: residues 310–321 (PGLPGAAGARGN) and 354–379 (PAGS…AGAQ). Positions 389–398 (GSPGGKGEMG) are enriched in gly residues. Residues 399–412 (PAGIPGAPGLIGAR) are compositionally biased toward low complexity. The segment covering 527–548 (GTPGGPGIRGMPGSPGGPGNDG) has biased composition (gly residues). Positions 606–615 (PAGKNGETGP) are enriched in low complexity. Gly residues-rich tracts occupy residues 641-650 (GIPGTGGPPG) and 668-677 (GAPGGKGDSG). The segment covering 678–691 (APGERGPPGTAGIP) has biased composition (low complexity). The segment covering 692–708 (GARGGAGPPGPEGGKGP) has biased composition (gly residues). A compositionally biased stretch (low complexity) spans 717–727 (ASGSPGLQGMP). The segment covering 822–834 (AKGERGAPGEKGE) has biased composition (basic and acidic residues). 5-hydroxylysine is present on Lys-859. Over residues 863-879 (GSPGGPGTAGFPGGRGL) the composition is skewed to gly residues. Residues 889–906 (PGPPGPSGAPGKDGPPGP) are compositionally biased toward pro residues. Composition is skewed to low complexity over residues 907–934 (AGNS…KGPP) and 945–960 (PLGI…LAGP). 5-hydroxylysine is present on Lys-976. Positions 1045-1054 (PGHPGPPGPV) are enriched in pro residues. Residues 1068 to 1084 (PAGPSGAPGPAGARGAP) show a composition bias toward low complexity. A 5-hydroxylysine mark is found at Lys-1093 and Lys-1105. A compositionally biased stretch (low complexity) spans 1120-1132 (PGAAGHQGAIGSP). Residues 1180–1192 (PGQPGPPGPPGAP) show a composition bias toward pro residues. A propeptide spans 1220-1464 (DDPMDFKINT…GVDIGPVCFL (245 aa)) (C-terminal propeptide). A Fibrillar collagen NC1 domain is found at 1230 to 1464 (EEIMSSLKSV…GVDIGPVCFL (235 aa)). Cystine bridges form between Cys-1260–Cys-1292, Cys-1300–Cys-1462, and Cys-1370–Cys-1415. Residues Asp-1278, Asn-1280, Gln-1281, Cys-1283, and Asp-1286 each coordinate Ca(2+).

It belongs to the fibrillar collagen family. Trimers of identical alpha 1(III) chains. The chains are linked to each other by interchain disulfide bonds. Trimers are also cross-linked via hydroxylysines. Interacts with ADGRG1. Post-translationally, proline residues at the third position of the tripeptide repeating unit (G-X-Y) are hydroxylated in some or all of the chains. O-linked glycan consists of a Glc-Gal disaccharide bound to the oxygen atom of a post-translationally added hydroxyl group. Expressed in embryonic brain, specifically in the meninges, pial basement membrane and blood vessels (at protein level).

It localises to the secreted. The protein resides in the extracellular space. Its subcellular location is the extracellular matrix. Collagen type III occurs in most soft connective tissues along with type I collagen. Involved in regulation of cortical development. Is the major ligand of ADGRG1 in the developing brain and binding to ADGRG1 inhibits neuronal migration and activates the RhoA pathway by coupling ADGRG1 to GNA13 and possibly GNA12. The sequence is that of Collagen alpha-1(III) chain (Col3a1) from Mus musculus (Mouse).